The sequence spans 476 residues: 2-(3-amino-3-carboxypropyl)histidine synthase subunit 2 (476 aa).

Positions 1 to 15 are enriched in polar residues; the sequence is MTESAPSAFFTTSTP. Residues 1–24 form a disordered region; sequence MTESAPSAFFTTSTPADHVHEEES. [4Fe-4S] cluster-binding residues include C102, C123, and C347. A disordered region spans residues 451–476; that stretch reads DGVSTAEDSTKMGEGRSGIAQGYSGK.

This sequence belongs to the DPH1/DPH2 family. DPH2 subfamily. As to quaternary structure, component of the 2-(3-amino-3-carboxypropyl)histidine synthase complex composed of dph-1, dph-2, dph-3 and a NADH-dependent reductase. [4Fe-4S] cluster serves as cofactor.

It functions in the pathway protein modification; peptidyl-diphthamide biosynthesis. Functionally, required for the first step of diphthamide biosynthesis, a post-translational modification of histidine which occurs in elongation factor 2. Dph-1 and dph-2 transfer a 3-amino-3-carboxypropyl (ACP) group from S-adenosyl-L-methionine (SAM) to a histidine residue, the reaction is assisted by a reduction system comprising dph-3 and a NADH-dependent reductase. Facilitates the reduction of the catalytic iron-sulfur cluster found in the dph-1 subunit. In Caenorhabditis elegans, this protein is 2-(3-amino-3-carboxypropyl)histidine synthase subunit 2 (dph-2).